A 755-amino-acid polypeptide reads, in one-letter code: Large structural phosphoprotein (755 aa).

2 disordered regions span residues 312–333 (ESSSKKTSHGSSFNPEPFIKTE) and 522–555 (QSFDDEHNEMSLPPQDQKSIKQKNGNKANSSTKT). The segment covering 535–555 (PQDQKSIKQKNGNKANSSTKT) has biased composition (polar residues).

This sequence belongs to the herpesviridae large structural phosphoprotein family. Post-translationally, phosphorylated at multiple sites.

It is found in the virion tegument. In Homo sapiens (Human), this protein is Large structural phosphoprotein (U11).